We begin with the raw amino-acid sequence, 356 residues long: 4-hydroxy-3-methylbut-2-en-1-yl diphosphate synthase (flavodoxin) (356 aa).

The [4Fe-4S] cluster site is built by Cys264, Cys267, Cys299, and Glu306.

This sequence belongs to the IspG family. [4Fe-4S] cluster serves as cofactor.

It carries out the reaction (2E)-4-hydroxy-3-methylbut-2-enyl diphosphate + oxidized [flavodoxin] + H2O + 2 H(+) = 2-C-methyl-D-erythritol 2,4-cyclic diphosphate + reduced [flavodoxin]. Its pathway is isoprenoid biosynthesis; isopentenyl diphosphate biosynthesis via DXP pathway; isopentenyl diphosphate from 1-deoxy-D-xylulose 5-phosphate: step 5/6. Functionally, converts 2C-methyl-D-erythritol 2,4-cyclodiphosphate (ME-2,4cPP) into 1-hydroxy-2-methyl-2-(E)-butenyl 4-diphosphate. This Campylobacter lari (strain RM2100 / D67 / ATCC BAA-1060) protein is 4-hydroxy-3-methylbut-2-en-1-yl diphosphate synthase (flavodoxin).